The sequence spans 1463 residues: MSKKLKEQAANDASEGDAIKVFVRVRPSESHDADAAFGQCLEVRLPDTIIMHSKPEPKVFTYDHVTAANTTQESVFTAVGKRIIESCVGGFNGTIFAYGQTGSGKTFTMLGPCEDGDNFHHEMRGVIPRSFEYLFSLVNREREKHGDRYEFLCRCSFLEIYNEQIYDLLDPASLGLHLRENMKKGVFVDGLIERAVASASEAYGVLQAGWHNRRVAATSMNRESSRSHAVFTVSIESKEKKAGVSNIRVSQLHLVDLAGSERQKDTKAIGVRLKEAGSINKSLSILGNVIMALVDIAHGKQRHVPYRDSKLSFLLRDSLGGNAKTYIIANVHPDAKCFGETLSTLKFARRAKMIKNRAVVNEDTQGNVMHLQAEIRRLREALCMKGAEGSIPRGPSESGDSQMSNSSTESNGPVSGQQSGSSSSSKWKKYFLEAMSLRDIVEVEKREMREKVSSLEELCSKRDQVISSNKMIIKFRNSTIDMLQKTKNKALLKEDRDLLNENLKKEIEQLQEQLEHNPFVMRYVVENQSLRAQNKKLKMMEAVRSGEAMAATKAEELETLFLELREGLSKNRRYSSTPVDGEKVPTSTLVILKSQIKKLQDELENAKQEHAEQEEMTRTTRLDLESELAAYKKANLDMEKTLQGMKIKNRMDRDAMNDIHMQTIKSITTPKKVTYQLRSRTVLRTAGEETPGGPGFAGLSDNGSPLRSHSTNSLPPSGDILVTNSSPAMSEEGIIDEEMPEHVIEQCNEALTIELQKLQDKNANLQQQLEEHESQKHKMLQNSSKLDHQLQQITELYSTESQAWQEHEKDLTTRLAEATIQISTLQRDYEMTRGEAEDFKVMLQAADKEIGQEKKQKSKVTQDWDRVRAALDAQVVRLENEMCGQSRELENLTEDREQLQDAYNTLQAEHEFQQQREADLENRLKGKKAEITQLQEEIQKHLEKLDSERDKSMRLTAELRQGDNTKKDLLDAQELIDQFREERDDLLHRLDTEALKLSSSKEDLETVNSALTAIKKTDVEQKEALSSLMAALQGQKGMVKDKEEQLASMQMQLEDTRGQVSLLEAALEEGKASGAGLQSQIAALEDRMHAQAGEYQEQIEQMRADAMDANQHQKELLKELEKQSEELTQLHKQMKEKEEEYETKESEHKDTIESLEEQLEEVKTNLSTVVVELDEPESKKRKMADAQAMEIESLRDSEKRFKELSSVYDNMRDQMNEEIRSLKMKADELEDVRISKEILQAQHTALTYEIEQVRNEMAEKESSLKDEVNHLKRDMERQKTVLASMLRDKDEAVEKLYTVQTTLDQVKANEEILQENMDQVMEELDRTSALESTHFKEKEDIKSKLEEEREEKSKLTKDLTRLKEVYEEAEKKITELGGHQNPKQKIHHLQAVKSENYFLKEEVESLEKQLGKAQSDSEQMKRDYEALQKRLTSSSAEPPEEAGATTCIRCLPHSKRIMQTQTA.

One can recognise a Kinesin motor domain in the interval 18-354; sequence AIKVFVRVRP…LKFARRAKMI (337 aa). 99 to 106 serves as a coordination point for ATP; it reads GQTGSGKT. The segment at 387-424 is disordered; it reads AEGSIPRGPSESGDSQMSNSSTESNGPVSGQQSGSSSS. Over residues 398–414 the composition is skewed to polar residues; the sequence is SGDSQMSNSSTESNGPV. The span at 415-424 shows a compositional bias: low complexity; the sequence is SGQQSGSSSS. 2 coiled-coil regions span residues 436 to 517 and 586 to 646; these read SLRD…LEHN and TSTL…QGMK. Disordered regions lie at residues 686 to 720, 1335 to 1356, and 1409 to 1444; these read AGEE…SGDI, FKEK…SKLT, and QLGK…EAGA. The segment covering 701–715 has biased composition (polar residues); the sequence is DNGSPLRSHSTNSLP. The span at 1418 to 1428 shows a compositional bias: basic and acidic residues; sequence EQMKRDYEALQ.

Belongs to the TRAFAC class myosin-kinesin ATPase superfamily. Kinesin family. KLP2 subfamily. Homodimer.

The protein localises to the cytoplasm. It is found in the cytoskeleton. It localises to the spindle. In terms of biological role, plus-end directed kinesin-like motor enzyme involved in mitotic spindle assembly. Plays a role in positioning spindle poles during mitosis, specifically at prometaphase. The sequence is that of Kinesin-like protein KIF15 (KIF15) from Strongylocentrotus purpuratus (Purple sea urchin).